The following is an 875-amino-acid chain: Alanine--tRNA ligase (875 aa).

4 residues coordinate Zn(2+): His-562, His-566, Cys-665, and His-669.

Belongs to the class-II aminoacyl-tRNA synthetase family. The cofactor is Zn(2+).

The protein localises to the cytoplasm. It catalyses the reaction tRNA(Ala) + L-alanine + ATP = L-alanyl-tRNA(Ala) + AMP + diphosphate. Functionally, catalyzes the attachment of alanine to tRNA(Ala) in a two-step reaction: alanine is first activated by ATP to form Ala-AMP and then transferred to the acceptor end of tRNA(Ala). Also edits incorrectly charged Ser-tRNA(Ala) and Gly-tRNA(Ala) via its editing domain. The sequence is that of Alanine--tRNA ligase from Saccharophagus degradans (strain 2-40 / ATCC 43961 / DSM 17024).